We begin with the raw amino-acid sequence, 182 residues long: Riboflavin kinase (182 aa).

T39 and N41 together coordinate Mg(2+). The active-site Nucleophile is E117.

It belongs to the flavokinase family. The cofactor is Zn(2+). Requires Mg(2+) as cofactor.

The enzyme catalyses riboflavin + ATP = FMN + ADP + H(+). It functions in the pathway cofactor biosynthesis; FMN biosynthesis; FMN from riboflavin (ATP route): step 1/1. Its function is as follows. Catalyzes the phosphorylation of riboflavin (vitamin B2) to form flavin mononucleotide (FMN) coenzyme. The polypeptide is Riboflavin kinase (FMN1) (Lodderomyces elongisporus (strain ATCC 11503 / CBS 2605 / JCM 1781 / NBRC 1676 / NRRL YB-4239) (Yeast)).